The chain runs to 539 residues: MRLNRETIKDRAAWEKIGVRPPYFDLDEVEKNTKEQPKWVHFGGGNIFRGFVAAVLQNLLEEGKEDTGINVIELFDYEVIDKVYKPYDNLSIAVTIKPDGDFEKRIIASVMEALKGDPSHPDWERAKEIFRNPSLQLASLTITEKGYNIEDQAGNLFPQVMEDMKNGPVSPQTSMGKVAALLYERFKAGRLPIALLSLDNFSRNGEKLYSSVKRISEEWVKSGLVEKDFIDYLEKDVAFPWSMIDKIVPGPSEFIKEHLEKLGIEGMEIFVTSKRTHIAPFVNMEWAQYLVIEDSFPNGRPKLEGADRNVFLTDRETVEKAERMKVTTCLNPLHTALAIFGCLLGYKKIADEMKDPLLKKLVEGVGEEGIKVVVDPGIINPREFLNEVINIRLPNPYLPDTPQRIATDTSQKMPIRFGETIKAYHERPDLDPRNLKYIPLVIAGWCRYLMGIDDEGREMQLSPDPLLENLRSYVSKIKFGDPESTDDHLKPILSSQQLFRVNLYEVGLGEKIEELFKKMITGPRAVRKTLEEVVGREDG.

39-50 (WVHFGGGNIFRG) serves as a coordination point for NAD(+).

Belongs to the mannitol dehydrogenase family. UxuB subfamily.

It catalyses the reaction D-mannonate + NAD(+) = keto-D-fructuronate + NADH + H(+). It participates in carbohydrate metabolism. Functionally, catalyzes the reduction of D-fructuronate (D-FruA) to D-mannonate (D-ManA). In Thermotoga maritima (strain ATCC 43589 / DSM 3109 / JCM 10099 / NBRC 100826 / MSB8), this protein is D-mannonate oxidoreductase.